The chain runs to 121 residues: uncharacterized protein (121 aa).

This is an uncharacterized protein from Bacillus subtilis (strain 168).